A 151-amino-acid polypeptide reads, in one-letter code: Large ribosomal subunit protein bL9 (151 aa).

The protein belongs to the bacterial ribosomal protein bL9 family.

Its function is as follows. Binds to the 23S rRNA. The protein is Large ribosomal subunit protein bL9 of Lactobacillus delbrueckii subsp. bulgaricus (strain ATCC BAA-365 / Lb-18).